The chain runs to 254 residues: Pimeloyl-[acyl-carrier protein] methyl ester esterase (254 aa).

One can recognise an AB hydrolase-1 domain in the interval 16-241 (LVLLHGWGMN…QSSHAPFMTE (226 aa)). Residues Trp22, 82–83 (SL), and 143–147 (FMALQ) contribute to the substrate site. Ser82 acts as the Nucleophile in catalysis. Catalysis depends on residues Asp207 and His235. His235 contacts substrate.

Belongs to the AB hydrolase superfamily. Carboxylesterase BioH family. In terms of assembly, monomer.

The protein resides in the cytoplasm. It carries out the reaction 6-carboxyhexanoyl-[ACP] methyl ester + H2O = 6-carboxyhexanoyl-[ACP] + methanol + H(+). It participates in cofactor biosynthesis; biotin biosynthesis. The physiological role of BioH is to remove the methyl group introduced by BioC when the pimeloyl moiety is complete. It allows to synthesize pimeloyl-ACP via the fatty acid synthetic pathway through the hydrolysis of the ester bonds of pimeloyl-ACP esters. In Vibrio campbellii (strain ATCC BAA-1116), this protein is Pimeloyl-[acyl-carrier protein] methyl ester esterase.